The primary structure comprises 237 residues: Phosphoribosylaminoimidazole-succinocarboxamide synthase (237 aa).

This sequence belongs to the SAICAR synthetase family.

It carries out the reaction 5-amino-1-(5-phospho-D-ribosyl)imidazole-4-carboxylate + L-aspartate + ATP = (2S)-2-[5-amino-1-(5-phospho-beta-D-ribosyl)imidazole-4-carboxamido]succinate + ADP + phosphate + 2 H(+). The protein operates within purine metabolism; IMP biosynthesis via de novo pathway; 5-amino-1-(5-phospho-D-ribosyl)imidazole-4-carboxamide from 5-amino-1-(5-phospho-D-ribosyl)imidazole-4-carboxylate: step 1/2. This chain is Phosphoribosylaminoimidazole-succinocarboxamide synthase, found in Yersinia enterocolitica serotype O:8 / biotype 1B (strain NCTC 13174 / 8081).